The following is a 152-amino-acid chain: Ribonuclease H (152 aa).

Residues 1 to 142 (MDSKVVIYTD…ADKLAVQGRE (142 aa)) enclose the RNase H type-1 domain. Mg(2+) contacts are provided by Asp10, Glu48, Asp70, and Asp134.

This sequence belongs to the RNase H family. As to quaternary structure, monomer. Mg(2+) serves as cofactor.

It is found in the cytoplasm. The catalysed reaction is Endonucleolytic cleavage to 5'-phosphomonoester.. Endonuclease that specifically degrades the RNA of RNA-DNA hybrids. This Rickettsia typhi (strain ATCC VR-144 / Wilmington) protein is Ribonuclease H.